A 764-amino-acid polypeptide reads, in one-letter code: Polyadenylate-binding protein, cytoplasmic and nuclear (764 aa).

The interval 36 to 56 (VPEAQAEGAEAAPTPTAAPHP) is disordered. RRM domains lie at 60–138 (ASLY…WSQR), 148–225 (GNIF…HHIP), 241–318 (TNVY…RAQK), and 344–462 (VNLY…LAQR). Disordered regions lie at residues 375–420 (VMRD…GDRK) and 587–634 (GRGG…PRGN). 2 stretches are compositionally biased toward basic and acidic residues: residues 387–399 (KDEK…KEGE) and 408–420 (GSEK…GDRK). The span at 587-596 (GRGGPAGRGP) shows a compositional bias: gly residues. Residues 597–613 (QGIPAGIPQGLQGGPAV) show a composition bias toward low complexity. The PABC domain occupies 657 to 734 (GSFLQAQLAT…ALAVYDEYLK (78 aa)). The span at 735–745 (TQGQQPTQQPA) shows a compositional bias: polar residues. The segment at 735–764 (TQGQQPTQQPAEANGEQPKAEEQKPEEQKA) is disordered. Residues 752–764 (PKAEEQKPEEQKA) are compositionally biased toward basic and acidic residues.

It belongs to the polyadenylate-binding protein type-1 family.

The protein resides in the cytoplasm. Its subcellular location is the nucleus. Binds the poly(A) tail of mRNA. Appears to be an important mediator of the multiple roles of the poly(A) tail in mRNA biogenesis, stability and translation. In the nucleus, involved in both mRNA cleavage and polyadenylation. Is also required for efficient mRNA export to the cytoplasm. Acts in concert with a poly(A)-specific nuclease (PAN) to affect poly(A) tail shortening, which may occur concomitantly with either nucleocytoplasmic mRNA transport or translational initiation. In the cytoplasm, stimulates translation initiation and regulates mRNA decay through translation termination-coupled poly(A) shortening, probably mediated by PAN. The chain is Polyadenylate-binding protein, cytoplasmic and nuclear (pabp-1) from Neurospora crassa (strain ATCC 24698 / 74-OR23-1A / CBS 708.71 / DSM 1257 / FGSC 987).